We begin with the raw amino-acid sequence, 494 residues long: Guanosine-5'-triphosphate,3'-diphosphate pyrophosphatase (494 aa).

This sequence belongs to the GppA/Ppx family. GppA subfamily.

It carries out the reaction guanosine 3'-diphosphate 5'-triphosphate + H2O = guanosine 3',5'-bis(diphosphate) + phosphate + H(+). Its pathway is purine metabolism; ppGpp biosynthesis; ppGpp from GTP: step 2/2. Catalyzes the conversion of pppGpp to ppGpp. Guanosine pentaphosphate (pppGpp) is a cytoplasmic signaling molecule which together with ppGpp controls the 'stringent response', an adaptive process that allows bacteria to respond to amino acid starvation, resulting in the coordinated regulation of numerous cellular activities. The polypeptide is Guanosine-5'-triphosphate,3'-diphosphate pyrophosphatase (Escherichia coli O157:H7).